Consider the following 86-residue polypeptide: Small ribosomal subunit protein bS16 (86 aa).

It belongs to the bacterial ribosomal protein bS16 family.

This Bordetella avium (strain 197N) protein is Small ribosomal subunit protein bS16.